Reading from the N-terminus, the 251-residue chain is 3-deoxy-manno-octulosonate cytidylyltransferase (251 aa).

The protein belongs to the KdsB family.

It is found in the cytoplasm. The enzyme catalyses 3-deoxy-alpha-D-manno-oct-2-ulosonate + CTP = CMP-3-deoxy-beta-D-manno-octulosonate + diphosphate. It functions in the pathway nucleotide-sugar biosynthesis; CMP-3-deoxy-D-manno-octulosonate biosynthesis; CMP-3-deoxy-D-manno-octulosonate from 3-deoxy-D-manno-octulosonate and CTP: step 1/1. The protein operates within bacterial outer membrane biogenesis; lipopolysaccharide biosynthesis. In terms of biological role, activates KDO (a required 8-carbon sugar) for incorporation into bacterial lipopolysaccharide in Gram-negative bacteria. In Geotalea uraniireducens (strain Rf4) (Geobacter uraniireducens), this protein is 3-deoxy-manno-octulosonate cytidylyltransferase.